Consider the following 426-residue polypeptide: Tol-Pal system protein TolB (426 aa).

The first 25 residues, Met-1–Ala-25, serve as a signal peptide directing secretion.

This sequence belongs to the TolB family. In terms of assembly, the Tol-Pal system is composed of five core proteins: the inner membrane proteins TolA, TolQ and TolR, the periplasmic protein TolB and the outer membrane protein Pal. They form a network linking the inner and outer membranes and the peptidoglycan layer.

Its subcellular location is the periplasm. Its function is as follows. Part of the Tol-Pal system, which plays a role in outer membrane invagination during cell division and is important for maintaining outer membrane integrity. The polypeptide is Tol-Pal system protein TolB (Dechloromonas aromatica (strain RCB)).